A 142-amino-acid chain; its full sequence is Ribonuclease VapC31 (142 aa).

The region spanning 3 to 139 (LLDANVLLAA…ARFASVRHIR (137 aa)) is the PINc domain. D5 and D108 together coordinate Mg(2+).

It belongs to the PINc/VapC protein family. Mg(2+) is required as a cofactor.

Its function is as follows. Toxic component of a type II toxin-antitoxin (TA) system. An RNase. Its toxic effect is neutralized by coexpression with cognate antitoxin VapB31. The sequence is that of Ribonuclease VapC31 from Mycobacterium tuberculosis (strain CDC 1551 / Oshkosh).